Here is a 553-residue protein sequence, read N- to C-terminus: ATP synthase F(1) complex subunit alpha, mitochondrial (553 aa).

A mitochondrion-targeting transit peptide spans 1–43 (MLSVRVAAAVARALPRRAGLVSKNALGSSFVGARNLHASNTRL). Phosphoserine occurs at positions 53 and 65. Serine 76 bears the Phosphoserine; alternate mark. Serine 76 carries an O-linked (GlcNAc) serine; alternate glycan. Serine 106 bears the Phosphoserine mark. N6-acetyllysine is present on residues lysine 123, lysine 126, and lysine 132. The residue at position 134 (threonine 134) is a Phosphothreonine. Lysine 161 is subject to N6-acetyllysine; alternate. Lysine 161 carries the N6-succinyllysine; alternate modification. Residue serine 166 is modified to Phosphoserine. An N6-acetyllysine; alternate modification is found at lysine 167. Lysine 167 carries the N6-succinyllysine; alternate modification. Phosphoserine is present on serine 184. An Omega-N-methylarginine modification is found at arginine 204. ATP contacts are provided by glutamine 215, glycine 217, lysine 218, threonine 219, and serine 220. Residue threonine 219 coordinates Mg(2+). 2 positions are modified to N6-acetyllysine; alternate: lysine 230 and lysine 239. 2 positions are modified to N6-succinyllysine; alternate: lysine 230 and lysine 239. N6-acetyllysine is present on lysine 240. An N6-acetyllysine; alternate mark is found at lysine 261 and lysine 305. Residues lysine 261 and lysine 305 each carry the N6-succinyllysine; alternate modification. Aspartate 312 lines the Mg(2+) pocket. The residue at position 427 (lysine 427) is an N6-acetyllysine; alternate. Lysine 427 bears the N6-succinyllysine; alternate mark. Lysine 434 is modified (N6-acetyllysine). ATP contacts are provided by glutamine 473 and glutamine 475. Lysine 498 and lysine 506 each carry N6-acetyllysine; alternate. An N6-succinyllysine; alternate mark is found at lysine 498 and lysine 506. At serine 521 the chain carries Phosphoserine. An N6-acetyllysine; alternate mark is found at lysine 531 and lysine 539. Residues lysine 531 and lysine 539 each carry the N6-succinyllysine; alternate modification. Lysine 541 carries the post-translational modification N6-acetyllysine.

It belongs to the ATPase alpha/beta chains family. As to quaternary structure, homotrimer. Component of the ATP synthase complex composed at least of ATP5F1A/subunit alpha, ATP5F1B/subunit beta, ATP5MC1/subunit c (homooctomer), MT-ATP6/subunit a, MT-ATP8/subunit 8, ATP5ME/subunit e, ATP5MF/subunit f, ATP5MG/subunit g, ATP5MK/subunit k, ATP5MJ/subunit j, ATP5F1C/subunit gamma, ATP5F1D/subunit delta, ATP5F1E/subunit epsilon, ATP5PF/subunit F6, ATP5PB/subunit b, ATP5PD/subunit d, ATP5PO/subunit OSCP. ATP synthase complex consists of a soluble F(1) head domain (subunits alpha(3) and beta(3)) - the catalytic core - and a membrane F(0) domain - the membrane proton channel (subunits c, a, 8, e, f, g, k and j). These two domains are linked by a central stalk (subunits gamma, delta, and epsilon) rotating inside the F1 region and a stationary peripheral stalk (subunits F6, b, d, and OSCP). Interacts with ATPAF2. Interacts with HRG; the interaction occurs on the surface of T-cells and alters the cell morphology when associated with concanavalin (in vitro). Interacts with PLG (angiostatin peptide); the interaction inhibits most of the angiogenic properties of angiostatin. Interacts with BLOC1S1. Interacts with BCL2L1 isoform BCL-X(L); the interaction mediates the association of BCL2L1 isoform BCL-X(L) with the mitochondrial membrane F(1)F(0) ATP synthase and enhances neurons metabolic efficiency. Interacts with CLN5 and PPT1. Interacts with S100A1; this interaction increases F1-ATPase activity. Interacts with ABCB7; this interaction allows the regulation of cellular iron homeostasis and cellular reactive oxygen species (ROS) levels in cardiomyocytes. In terms of processing, acetylated on lysine residues. BLOC1S1 is required for acetylation. Acetylation of Lys-132, Lys-230 and Lys-498 is observed in liver mitochondria from fasted mice but not from fed mice.

It localises to the mitochondrion inner membrane. The protein localises to the cell membrane. Subunit alpha, of the mitochondrial membrane ATP synthase complex (F(1)F(0) ATP synthase or Complex V) that produces ATP from ADP in the presence of a proton gradient across the membrane which is generated by electron transport complexes of the respiratory chain. ATP synthase complex consist of a soluble F(1) head domain - the catalytic core - and a membrane F(1) domain - the membrane proton channel. These two domains are linked by a central stalk rotating inside the F(1) region and a stationary peripheral stalk. During catalysis, ATP synthesis in the catalytic domain of F(1) is coupled via a rotary mechanism of the central stalk subunits to proton translocation. In vivo, can only synthesize ATP although its ATP hydrolase activity can be activated artificially in vitro. With the catalytic subunit beta (ATP5F1B), forms the catalytic core in the F(1) domain. Subunit alpha does not bear the catalytic high-affinity ATP-binding sites. The chain is ATP synthase F(1) complex subunit alpha, mitochondrial from Mus musculus (Mouse).